The sequence spans 513 residues: Light-independent protochlorophyllide reductase subunit B (513 aa).

Asp-36 lines the [4Fe-4S] cluster pocket. Asp-299 serves as the catalytic Proton donor. 434–435 is a substrate binding site; it reads GM.

Belongs to the ChlB/BchB/BchZ family. As to quaternary structure, protochlorophyllide reductase is composed of three subunits; ChlL, ChlN and ChlB. Forms a heterotetramer of two ChlB and two ChlN subunits. [4Fe-4S] cluster serves as cofactor.

It is found in the plastid. It localises to the chloroplast. It catalyses the reaction chlorophyllide a + oxidized 2[4Fe-4S]-[ferredoxin] + 2 ADP + 2 phosphate = protochlorophyllide a + reduced 2[4Fe-4S]-[ferredoxin] + 2 ATP + 2 H2O. It participates in porphyrin-containing compound metabolism; chlorophyll biosynthesis (light-independent). Component of the dark-operative protochlorophyllide reductase (DPOR) that uses Mg-ATP and reduced ferredoxin to reduce ring D of protochlorophyllide (Pchlide) to form chlorophyllide a (Chlide). This reaction is light-independent. The NB-protein (ChlN-ChlB) is the catalytic component of the complex. The polypeptide is Light-independent protochlorophyllide reductase subunit B (Zygnema circumcarinatum (Green alga)).